Consider the following 181-residue polypeptide: Cell division protein ZapC (181 aa).

It belongs to the ZapC family. As to quaternary structure, interacts directly with FtsZ.

It is found in the cytoplasm. In terms of biological role, contributes to the efficiency of the cell division process by stabilizing the polymeric form of the cell division protein FtsZ. Acts by promoting interactions between FtsZ protofilaments and suppressing the GTPase activity of FtsZ. This chain is Cell division protein ZapC, found in Shewanella woodyi (strain ATCC 51908 / MS32).